Reading from the N-terminus, the 152-residue chain is D-aminoacyl-tRNA deacylase (152 aa).

The short motif at 142–143 (GP) is the Gly-cisPro motif, important for rejection of L-amino acids element.

The protein belongs to the DTD family. In terms of assembly, homodimer.

Its subcellular location is the cytoplasm. It carries out the reaction glycyl-tRNA(Ala) + H2O = tRNA(Ala) + glycine + H(+). The catalysed reaction is a D-aminoacyl-tRNA + H2O = a tRNA + a D-alpha-amino acid + H(+). An aminoacyl-tRNA editing enzyme that deacylates mischarged D-aminoacyl-tRNAs. Also deacylates mischarged glycyl-tRNA(Ala), protecting cells against glycine mischarging by AlaRS. Acts via tRNA-based rather than protein-based catalysis; rejects L-amino acids rather than detecting D-amino acids in the active site. By recycling D-aminoacyl-tRNA to D-amino acids and free tRNA molecules, this enzyme counteracts the toxicity associated with the formation of D-aminoacyl-tRNA entities in vivo and helps enforce protein L-homochirality. The polypeptide is D-aminoacyl-tRNA deacylase (Burkholderia cenocepacia (strain HI2424)).